Here is a 383-residue protein sequence, read N- to C-terminus: DNA dC-&gt;dU-editing enzyme APOBEC-3G (383 aa).

Residues methionine 1–proline 60 form an essential for cytoplasmic localization region. CMP/dCMP-type deaminase domains are found at residues arginine 29–leucine 138 and glycine 214–leucine 327. The residue at position 32 (threonine 32) is a Phosphothreonine; by PKA. Zn(2+) contacts are provided by histidine 65, cysteine 97, and cysteine 100. Residues lysine 209 to alanine 335 form a necessary for homooligomerization region. The interval serine 213–glutamine 215 is interaction with DNA. A Phosphothreonine; by PKA and CAMK2 modification is found at threonine 218. Histidine 257 lines the Zn(2+) pocket. The Proton donor role is filled by glutamate 259. Zn(2+) is bound by residues cysteine 287 and cysteine 290. The tract at residues arginine 312–arginine 319 is interaction with DNA.

This sequence belongs to the cytidine and deoxycytidylate deaminase family. Homodimer. Homooligomer. Can bind RNA to form ribonucleoprotein complexes of high-molecular-mass (HMM) or low-molecular-mass (LMM). HMM is inactive and heterogeneous in protein composition because of binding nonselectively to cellular RNAs, which in turn are associated with variety of cellular proteins. The LMM form which is enzymatically active has few or no RNAs associated. Its ability to form homooligomer is distinct from its ability to assemble into HMM. Interacts with APOBEC3B, APOBEC3F, MOV10, AGO2, EIF4E, EIF4ENIF1, DCP2 and DDX6 in an RNA-dependent manner. Interacts with AGO1, AGO3 and PKA/PRKACA. Requires Zn(2+) as cofactor.

The protein localises to the cytoplasm. It localises to the nucleus. It is found in the P-body. It carries out the reaction a 2'-deoxycytidine in single-stranded DNA + H2O + H(+) = a 2'-deoxyuridine in single-stranded DNA + NH4(+). In terms of biological role, DNA deaminase (cytidine deaminase) which acts as an inhibitor of retrovirus replication and retrotransposon mobility. After the penetration of retroviral nucleocapsids into target cells of infection and the initiation of reverse transcription, it can induce the conversion of cytosine to uracil in the minus-sense single-strand viral DNA, leading to G-to-A hypermutations in the subsequent plus-strand viral DNA. The resultant detrimental levels of mutations in the proviral genome, along with a deamination-independent mechanism that works prior to the proviral integration, together exert efficient antiretroviral effects in infected target cells. Selectively targets single-stranded DNA and does not deaminate double-stranded DNA or single- or double-stranded RNA. The chain is DNA dC-&gt;dU-editing enzyme APOBEC-3G (APOBEC3G) from Erythrocebus patas (Red guenon).